Reading from the N-terminus, the 195-residue chain is PRELI domain containing protein 3B (195 aa).

The region spanning 1–172 (MKIWTSEHVF…VIHKLNAEIE (172 aa)) is the PRELI/MSF1 domain. S46 and S51 each carry phosphoserine.

It belongs to the slowmo family.

This Mus musculus (Mouse) protein is PRELI domain containing protein 3B (Prelid3b).